Here is a 160-residue protein sequence, read N- to C-terminus: Eukaryotic translation initiation factor 5A-2 (160 aa).

Over residues 1–12 the composition is skewed to basic and acidic residues; that stretch reads MSDEEHHFESKA. The segment at 1 to 21 is disordered; sequence MSDEEHHFESKADAGASKTFP. Lys52 carries the post-translational modification Hypusine.

This sequence belongs to the eIF-5A family. Post-translationally, lys-52 undergoes hypusination, a unique post-translational modification that consists in the addition of a butylamino group from spermidine to lysine side chain, leading to the formation of the unusual amino acid hypusine. eIF-5As are the only known proteins to undergo this modification, which is essential for their function.

Translation factor that promotes translation elongation and termination, particularly upon ribosome stalling at specific amino acid sequence contexts. Binds between the exit (E) and peptidyl (P) site of the ribosome and promotes rescue of stalled ribosome: specifically required for efficient translation of polyproline-containing peptides as well as other motifs that stall the ribosome. Acts as a ribosome quality control (RQC) cofactor by joining the RQC complex to facilitate peptidyl transfer during CAT tailing step. In Solanum lycopersicum (Tomato), this protein is Eukaryotic translation initiation factor 5A-2.